A 69-amino-acid chain; its full sequence is Small, acid-soluble spore protein C4 (69 aa).

Belongs to the alpha/beta-type SASP family.

Its function is as follows. SASP are bound to spore DNA. They are double-stranded DNA-binding proteins that cause DNA to change to an a-like conformation. They protect the DNA backbone from chemical and enzymatic cleavage and are thus involved in dormant spore's high resistance to UV light. This chain is Small, acid-soluble spore protein C4 (SASP-C4), found in Priestia megaterium (Bacillus megaterium).